An 80-amino-acid polypeptide reads, in one-letter code: RNA-binding protein KhpA (80 aa).

Residues 33–80 (LEILQLRVASEDVGKVIGKHGRIARALRTLLSASAHASQTRYALEIID) enclose the KH domain.

It belongs to the KhpA RNA-binding protein family. Forms a complex with KhpB.

It localises to the cytoplasm. A probable RNA chaperone. Forms a complex with KhpB which binds to cellular RNA and controls its expression. Plays a role in peptidoglycan (PG) homeostasis and cell length regulation. The protein is RNA-binding protein KhpA of Treponema pallidum (strain Nichols).